A 312-amino-acid chain; its full sequence is Pectin lyase (312 aa).

Residue arginine 201 is part of the active site. Positions 254-274 (GSGTFTDTNSVPPITNQKSPK) are disordered. The span at 256 to 274 (GTFTDTNSVPPITNQKSPK) shows a compositional bias: polar residues.

The protein belongs to the polysaccharide lyase 1 family.

The catalysed reaction is Eliminative cleavage of (1-&gt;4)-alpha-D-galacturonan methyl ester to give oligosaccharides with 4-deoxy-6-O-methyl-alpha-D-galact-4-enuronosyl groups at their non-reducing ends.. This is Pectin lyase (pnl) from Pseudomonas marginalis (Pseudomonas panacis).